A 210-amino-acid chain; its full sequence is MVQSCSAYGCKNRYDKDKPVSFHKFPLTRPSLCKQWEAAVKRKNFKPTKYSSICSEHFTPDCFKRECNNKLLKENAVPTIFLYIEPHEKKEDLESQEQLPSPSPPASQVDAAIGLLMPPLQTPDNLSVFCDHNYTVEDTMHQRKRILQLEQQVEKLRKKLKTAQQRCRRQERQLEKLKEVVHFQREKDDASERGYVILPNDYFEIVEVPA.

The segment at 5 to 57 (CSAYGCKNRYDKDKPVSFHKFPLTRPSLCKQWEAAVKRKNFKPTKYSSICSEH) adopts a THAP-type zinc-finger fold. The HCFC1-binding motif (HBM) signature appears at 131–134 (DHNY). Residues 137-187 (EDTMHQRKRILQLEQQVEKLRKKLKTAQQRCRRQERQLEKLKEVVHFQREK) adopt a coiled-coil conformation.

This sequence belongs to the THAP1 family. As to quaternary structure, interacts with PAWR. Component of a THAP1/THAP3-HCFC1-OGT complex that contains, either THAP1 or THAP3, HCFC1 and OGT. Interacts with OGT. Interacts (via the HBM) with HCFC1 (via the Kelch-repeat domain); the interaction recruits HCFC1 to the RRM1 promoter. Highest levels in heart, liver and kidney. Lower levels in brain and lung.

It localises to the nucleus. Its subcellular location is the nucleoplasm. The protein localises to the PML body. In terms of biological role, DNA-binding transcription regulator that regulates endothelial cell proliferation and G1/S cell-cycle progression. Specifically binds the 5'-[AT]NTNN[GT]GGCA[AGT]-3' core DNA sequence and acts by modulating expression of pRB-E2F cell-cycle target genes, including RRM1. Component of a THAP1/THAP3-HCFC1-OGT complex that is required for the regulation of the transcriptional activity of RRM1. May also have pro-apoptotic activity by potentiating both serum-withdrawal and TNF-induced apoptosis. This is THAP domain-containing protein 1 (Thap1) from Mus musculus (Mouse).